A 70-amino-acid polypeptide reads, in one-letter code: Large ribosomal subunit protein bL31 (70 aa).

This sequence belongs to the bacterial ribosomal protein bL31 family. Type A subfamily. In terms of assembly, part of the 50S ribosomal subunit.

Its function is as follows. Binds the 23S rRNA. This is Large ribosomal subunit protein bL31 from Chlorobium chlorochromatii (strain CaD3).